The sequence spans 187 residues: NADH-quinone oxidoreductase subunit C 2 (187 aa).

A disordered region spans residues 153–187 (YKDKLNPFGAEGPPPTQPDLATRDIPQGRPSTPES).

The protein belongs to the complex I 30 kDa subunit family. As to quaternary structure, NDH-1 is composed of 14 different subunits. Subunits NuoB, C, D, E, F, and G constitute the peripheral sector of the complex.

It localises to the cell inner membrane. It carries out the reaction a quinone + NADH + 5 H(+)(in) = a quinol + NAD(+) + 4 H(+)(out). NDH-1 shuttles electrons from NADH, via FMN and iron-sulfur (Fe-S) centers, to quinones in the respiratory chain. The immediate electron acceptor for the enzyme in this species is believed to be ubiquinone. Couples the redox reaction to proton translocation (for every two electrons transferred, four hydrogen ions are translocated across the cytoplasmic membrane), and thus conserves the redox energy in a proton gradient. This is NADH-quinone oxidoreductase subunit C 2 from Rhizobium etli (strain CIAT 652).